The chain runs to 310 residues: Probable RuBisCO transcriptional regulator (310 aa).

The HTH lysR-type domain maps to F6–T63. A DNA-binding region (H-T-H motif) is located at residues F23–Q42.

The protein belongs to the LysR transcriptional regulatory family.

It localises to the plastid. Its subcellular location is the chloroplast. Functionally, trans-acting transcriptional regulator of RuBisCO genes (rbcL and rbcS) expression. The polypeptide is Probable RuBisCO transcriptional regulator (rbcR) (Guillardia theta (Cryptophyte)).